The following is a 1330-amino-acid chain: Ubinuclein-2 (1330 aa).

Residues 1–113 (MAEPRRVAFI…PPPRPPKETV (113 aa)) are disordered. Ser-13 bears the Phosphoserine mark. 2 stretches are compositionally biased toward basic and acidic residues: residues 16 to 31 (RRREADFAGAEREPPR) and 55 to 67 (ARDKPLPQREVSR). Residues 81 to 96 (PEPPPPPLPLQTPPPR) show a composition bias toward pro residues. Thr-229 is subject to Phosphothreonine. Residue Ser-236 is modified to Phosphoserine. Disordered stretches follow at residues 236–304 (SDTE…KKRY) and 322–345 (DALKKESTPKVPVIPSTSSLPKPP). Phosphothreonine is present on Thr-238. A Glycyl lysine isopeptide (Lys-Gly) (interchain with G-Cter in SUMO2) cross-link involves residue Lys-258. Ser-297 carries the phosphoserine modification. Residues Ser-402, Ser-405, Ser-408, and Ser-570 each carry the phosphoserine modification. Disordered stretches follow at residues 559-583 (LQADEEREKNGSDDDDDEKPGKRVI), 767-789 (NKGPSVSSRLNVPTTKPRPGLRE), 801-835 (LATPKKLDSPQTAHSSSLIAGHTGPVPKKPQDLAH), 866-909 (GLQR…SLTQ), 964-991 (YRLPLSTPSPGNGSQGSHPLVSRTAPST), 1021-1202 (PKLA…SSVV), and 1292-1330 (PGTQHAATLPHSPLPTHLQQAFNDGGQSKGDTKLPRKPQ). Residues 560–570 (QADEEREKNGS) show a composition bias toward basic and acidic residues. Composition is skewed to polar residues over residues 767 to 780 (NKGPSVSSRLNVPT) and 809 to 818 (SPQTAHSSSL). Residues 866–895 (GLQRSSQIHASSSQTHVSSSQAQAAASSHA) are compositionally biased toward low complexity. 2 stretches are compositionally biased toward polar residues: residues 899–909 (SEAQDASSLTQ) and 969–980 (STPSPGNGSQGS). The span at 1030–1044 (ATSPKPLTSPKPSVS) shows a compositional bias: pro residues. The segment covering 1045–1056 (PKPSLSAKPSVS) has biased composition (low complexity). Lys-1052 is subject to N6-acetyllysine. 3 stretches are compositionally biased toward polar residues: residues 1073–1148 (PSSS…NSLS), 1158–1169 (RGSNLNSSGANR), and 1308–1317 (HLQQAFNDGG). A Phosphoserine modification is found at Ser-1107. Residue Lys-1132 is modified to N6-acetyllysine. Basic and acidic residues predominate over residues 1321–1330 (GDTKLPRKPQ).

The protein belongs to the ubinuclein family.

This chain is Ubinuclein-2 (Ubn2), found in Rattus norvegicus (Rat).